A 455-amino-acid chain; its full sequence is Glutamyl-tRNA reductase (455 aa).

Substrate-binding positions include 49–52, S109, 114–116, and Q120; these read TCNR and ETQ. The active-site Nucleophile is C50. 189–194 contributes to the NADP(+) binding site; that stretch reads GAGKMG.

It belongs to the glutamyl-tRNA reductase family. Homodimer.

It catalyses the reaction (S)-4-amino-5-oxopentanoate + tRNA(Glu) + NADP(+) = L-glutamyl-tRNA(Glu) + NADPH + H(+). Its pathway is porphyrin-containing compound metabolism; protoporphyrin-IX biosynthesis; 5-aminolevulinate from L-glutamyl-tRNA(Glu): step 1/2. In terms of biological role, catalyzes the NADPH-dependent reduction of glutamyl-tRNA(Glu) to glutamate 1-semialdehyde (GSA). The sequence is that of Glutamyl-tRNA reductase from Bacillus pumilus (strain SAFR-032).